We begin with the raw amino-acid sequence, 26 residues long: Halocyntin (26 aa).

Its function is as follows. Has strong antibacterial activity against the Gram-positive bacteria M.luteus, S.aureus, B.megaterium, A.viridans and E.faecalis, and against the Gram-negative bacterium K.pneumoniae. Has less potent antibacterial activity against the Gram-negative bacteria E.coli DH5alpha, S.typhimurium, P.aeruginosa, E.aerogenes and N.gonorrhoeae. Has moderate hemolytic activity against sheep erythrocytes. This is Halocyntin from Halocynthia papillosa (Red sea-squirt).